The chain runs to 460 residues: UDP-N-acetylmuramoylalanine--D-glutamate ligase (460 aa).

ATP is bound at residue 115 to 121; that stretch reads GTNGKTT.

The protein belongs to the MurCDEF family.

The protein localises to the cytoplasm. The catalysed reaction is UDP-N-acetyl-alpha-D-muramoyl-L-alanine + D-glutamate + ATP = UDP-N-acetyl-alpha-D-muramoyl-L-alanyl-D-glutamate + ADP + phosphate + H(+). The protein operates within cell wall biogenesis; peptidoglycan biosynthesis. Its function is as follows. Cell wall formation. Catalyzes the addition of glutamate to the nucleotide precursor UDP-N-acetylmuramoyl-L-alanine (UMA). In Salinibacter ruber (strain DSM 13855 / M31), this protein is UDP-N-acetylmuramoylalanine--D-glutamate ligase.